A 330-amino-acid chain; its full sequence is MKMYYESDVNTDALEGKTVAVMGYGSQGRAQSRNMADSGVNVIVGLRENGNSWNLAKEDGMTVKTFSDAAKEADIIHILLPDEIQEKVYNEQIAPYVEAGNTISFSHGYNIHFGLIKPDEDVNIVMFAPKGPGSRVRTTYLDGFGIPGLVAIEQDATGDALQLALGMAKACGFTKAGVIETTFKEETETDLFGEQAVLCGGLTALINAGFQTLVEAGYQPEIAYFETCHEVKLIVDDIYEHGFGGMWKDVSNTAEYGGLTRRDYVITEETKKGMKKVLSEIQDGTFKKQFADENATDAANLKEMRAAEDQETIEVVGERLRKACGLQKDD.

Residues 1-181 (MKMYYESDVN…GFTKAGVIET (181 aa)) form the KARI N-terminal Rossmann domain. NADP(+)-binding positions include 24 to 27 (YGSQ), R47, S52, and 82 to 85 (DEIQ). Residue H107 is part of the active site. G133 serves as a coordination point for NADP(+). In terms of domain architecture, KARI C-terminal knotted spans 182-327 (TFKEETETDL…ERLRKACGLQ (146 aa)). D190, E194, E226, and E230 together coordinate Mg(2+). S251 is a substrate binding site.

The protein belongs to the ketol-acid reductoisomerase family. Requires Mg(2+) as cofactor.

The catalysed reaction is (2R)-2,3-dihydroxy-3-methylbutanoate + NADP(+) = (2S)-2-acetolactate + NADPH + H(+). The enzyme catalyses (2R,3R)-2,3-dihydroxy-3-methylpentanoate + NADP(+) = (S)-2-ethyl-2-hydroxy-3-oxobutanoate + NADPH + H(+). It participates in amino-acid biosynthesis; L-isoleucine biosynthesis; L-isoleucine from 2-oxobutanoate: step 2/4. It functions in the pathway amino-acid biosynthesis; L-valine biosynthesis; L-valine from pyruvate: step 2/4. In terms of biological role, involved in the biosynthesis of branched-chain amino acids (BCAA). Catalyzes an alkyl-migration followed by a ketol-acid reduction of (S)-2-acetolactate (S2AL) to yield (R)-2,3-dihydroxy-isovalerate. In the isomerase reaction, S2AL is rearranged via a Mg-dependent methyl migration to produce 3-hydroxy-3-methyl-2-ketobutyrate (HMKB). In the reductase reaction, this 2-ketoacid undergoes a metal-dependent reduction by NADPH to yield (R)-2,3-dihydroxy-isovalerate. This chain is Ketol-acid reductoisomerase (NADP(+)), found in Methanobrevibacter smithii (strain ATCC 35061 / DSM 861 / OCM 144 / PS).